Reading from the N-terminus, the 455-residue chain is Venom prothrombin activator nigrarin-D (455 aa).

A signal peptide spans 1 to 20 (MAPPLLLCLILTFLWNLPEA). The propeptide occupies 21–40 (ESNVFLKSKVANRFLQRTKR). The Gla domain maps to 41–86 (SNSIFEEFKAGNIERECIEEKCSKEEAREVFEDNEKTETFWNVYVD). E46, E47, E54, E56, E59, E60, E65, E66, E69, E72, and E75 each carry 4-carboxyglutamate. An intrachain disulfide couples C57 to C62. Residues 86-122 (DGDQCSSNPCHYRGTCKDGIGSYTCTCLPNYEGKNCE) form the EGF-like 1; calcium-binding domain. Intrachain disulfides connect C90–C101, C95–C110, C112–C121, C129–C140, C136–C149, C151–C164, C172–C328, C216–C221, C236–C252, C376–C390, and C401–C429. S92 carries an O-linked (Hex...) serine glycan. Residues 129–164 (CRVFNGNCWHFCKSVQNEIQCSCAESYRLGDDGHSC) enclose the EGF-like 2 domain. A propeptide spans 182 to 209 (REASLPDFVQSQKAILLKKSDNPSPDIR) (activation peptide). Residues 210–453 (IINGMDCKLG…FIPWIKAIMS (244 aa)) enclose the Peptidase S1 domain. Catalysis depends on H251, which acts as the Charge relay system. N254 carries an N-linked (GlcNAc...) asparagine glycan. Residue D308 is the Charge relay system of the active site. The active-site Charge relay system is the S405.

It belongs to the peptidase S1 family. Snake venom subfamily. In terms of assembly, heterodimer of a light chain and a heavy chain; disulfide-linked. Post-translationally, the vitamin K-dependent, enzymatic carboxylation of some glutamate residues allows the modified protein to bind calcium. As to expression, expressed by the venom gland.

The protein localises to the secreted. It carries out the reaction Selective cleavage of Arg-|-Thr and then Arg-|-Ile bonds in prothrombin to form thrombin.. Its function is as follows. Snake prothrombin activator that attacks the hemostatic system of prey. This protein is functionally similar to blood coagulation factor Xa. The sequence is that of Venom prothrombin activator nigrarin-D from Cryptophis nigrescens (Eastern small-eyed snake).